The sequence spans 351 residues: MTTAVGRISDRGWFDVLDDWLKRDRFVFVGWSGLLLFPCAYMAIGGWLTGTTFATSWYTHGIASSYLEGCNFLTVAISTPADSMGHALLLLWGPEAQGAFVRWVQLGGLWTFTALHGAFALIGFMLRQFEIARLVGVRPYNAIAFSAPIALFVSVFLIYPLGQSSWFFAPSFGVAAIFRFILFFQGFHNWTLNPFHMMGVAGVLGGALLCAIHGATVENTLFEDGDDATTFRGFEPTQSEETYSMVTANRFWSQIFGIAFSNKRWLHFFMLFVPVMGLWMSAIGVVGLALNLRSYDFVSQEIRAAEDPEFETFYTKNILLNEGLRAWMAPQDQPHENFIFPEEVLPRGNAL.

The helical transmembrane segment at 39 to 59 (CAYMAIGGWLTGTTFATSWYT) threads the bilayer. His-116 lines the chlorophyll a pocket. Residues 123 to 139 (GFMLRQFEIARLVGVRP) form a helical membrane-spanning segment. Pheophytin a is bound by residues Gln-128 and Asn-141. The chain crosses the membrane as a helical span at residues 151–164 (LFVSVFLIYPLGQS). Residue His-196 coordinates chlorophyll a. A helical transmembrane segment spans residues 206 to 226 (GALLCAIHGATVENTLFEDGD). A plastoquinone is bound by residues His-213 and Phe-260. His-213 serves as a coordination point for Fe cation. His-267 is a Fe cation binding site. A helical membrane pass occupies residues 277–293 (GLWMSAIGVVGLALNLR).

Belongs to the reaction center PufL/M/PsbA/D family. PSII is composed of 1 copy each of membrane proteins PsbA, PsbB, PsbC, PsbD, PsbE, PsbF, PsbH, PsbI, PsbJ, PsbK, PsbL, PsbM, PsbT, PsbX, PsbY, PsbZ, Psb30/Ycf12, peripheral proteins PsbO, CyanoQ (PsbQ), PsbU, PsbV and a large number of cofactors. It forms dimeric complexes. The cofactor is The D1/D2 heterodimer binds P680, chlorophylls that are the primary electron donor of PSII, and subsequent electron acceptors. It shares a non-heme iron and each subunit binds pheophytin, quinone, additional chlorophylls, carotenoids and lipids. There is also a Cl(-1) ion associated with D1 and D2, which is required for oxygen evolution. The PSII complex binds additional chlorophylls, carotenoids and specific lipids..

It is found in the cellular thylakoid membrane. It catalyses the reaction 2 a plastoquinone + 4 hnu + 2 H2O = 2 a plastoquinol + O2. Its function is as follows. Photosystem II (PSII) is a light-driven water:plastoquinone oxidoreductase that uses light energy to abstract electrons from H(2)O, generating O(2) and a proton gradient subsequently used for ATP formation. It consists of a core antenna complex that captures photons, and an electron transfer chain that converts photonic excitation into a charge separation. The D1/D2 (PsbA/PsbD) reaction center heterodimer binds P680, the primary electron donor of PSII as well as several subsequent electron acceptors. D2 is needed for assembly of a stable PSII complex. The polypeptide is Photosystem II D2 protein (Prochlorothrix hollandica).